Here is a 234-residue protein sequence, read N- to C-terminus: Sugar fermentation stimulation protein homolog (234 aa).

The protein belongs to the SfsA family.

The protein is Sugar fermentation stimulation protein homolog of Idiomarina loihiensis (strain ATCC BAA-735 / DSM 15497 / L2-TR).